The following is a 186-amino-acid chain: ADP-ribosylation factor-like protein 8 (186 aa).

The segment at residues 1 to 19 (MLALINRILEWFKSIFWKE) is an intramembrane region (note=Mediates targeting to membranes). GTP is bound by residues 29-35 (QFSGKTT), 71-75 (DIGGQ), and 130-133 (NKRD).

The protein belongs to the small GTPase superfamily. Arf family. Interacts with tubulin. Interacts (in GTP-bound form) with Rilpl. Interacts with unc-104. In terms of tissue distribution, expressed throughout development, from embryo to adult stage, in different tissues such as larval motor neurons, salivary glands, testis and ovaries (at protein level).

The protein resides in the lysosome membrane. Its subcellular location is the synapse. The protein localises to the cell projection. It is found in the axon. It localises to the perikaryon. Its function is as follows. Required for normal functioning of the late endocytic pathway including lysosome motility and late endosome-lysosome fusion. Not required for the delivery of lysosomal membrane protein-containing vesicles to late endosomes. In larval motor neurons, mediates the anterograde axonal long-range transport of presynaptic lysosome-related vesicles required for presynaptic biogenesis and synaptic function. Acts downstream of Rab2 during presynaptic precursor vesicle biogenesis. Essential role in chromosome segregation. This Drosophila melanogaster (Fruit fly) protein is ADP-ribosylation factor-like protein 8.